The sequence spans 148 residues: NADH-quinone oxidoreductase subunit A (148 aa).

Helical transmembrane passes span 14–34 (WAFA…LVGG), 68–88 (FYLV…LYAW), and 98–118 (VGFV…VYLV).

This sequence belongs to the complex I subunit 3 family. In terms of assembly, NDH-1 is composed of 13 different subunits. Subunits NuoA, H, J, K, L, M, N constitute the membrane sector of the complex.

The protein localises to the cell inner membrane. It catalyses the reaction a quinone + NADH + 5 H(+)(in) = a quinol + NAD(+) + 4 H(+)(out). In terms of biological role, NDH-1 shuttles electrons from NADH, via FMN and iron-sulfur (Fe-S) centers, to quinones in the respiratory chain. The immediate electron acceptor for the enzyme in this species is believed to be ubiquinone. Couples the redox reaction to proton translocation (for every two electrons transferred, four hydrogen ions are translocated across the cytoplasmic membrane), and thus conserves the redox energy in a proton gradient. This Klebsiella pneumoniae subsp. pneumoniae (strain ATCC 700721 / MGH 78578) protein is NADH-quinone oxidoreductase subunit A.